Consider the following 79-residue polypeptide: Exodeoxyribonuclease 7 small subunit (79 aa).

The protein belongs to the XseB family. As to quaternary structure, heterooligomer composed of large and small subunits.

Its subcellular location is the cytoplasm. It carries out the reaction Exonucleolytic cleavage in either 5'- to 3'- or 3'- to 5'-direction to yield nucleoside 5'-phosphates.. In terms of biological role, bidirectionally degrades single-stranded DNA into large acid-insoluble oligonucleotides, which are then degraded further into small acid-soluble oligonucleotides. The protein is Exodeoxyribonuclease 7 small subunit of Lactococcus lactis subsp. cremoris (strain MG1363).